An 84-amino-acid polypeptide reads, in one-letter code: CDC42 small effector protein 2 (84 aa).

2 S-palmitoyl cysteine lipidation sites follow: Cys-10 and Cys-11. The CRIB domain maps to 29 to 42; sequence IGEPTNFVHTAHVG. Phosphoserine occurs at positions 43 and 52.

This sequence belongs to the CDC42SE/SPEC family. As to quaternary structure, interacts with CDC42 (in GTP-bound form). Interacts weakly with RAC1 and not at all with RHOA. Widely expressed. Expressed at higher level in T-lymphocytes. Highly expressed in CCRF-CEM T-lymphocytes, Jurkat T-lymphocytes, and Raji B-lymphocytes compared (at protein level).

It localises to the cytoplasm. Its subcellular location is the cytoskeleton. It is found in the cell membrane. The protein resides in the cell projection. The protein localises to the phagocytic cup. Functionally, probably involved in the organization of the actin cytoskeleton by acting downstream of CDC42, inducing actin filament assembly. Alters CDC42-induced cell shape changes. In activated T-cells, may play a role in CDC42-mediated F-actin accumulation at the immunological synapse. May play a role in early contractile events in phagocytosis in macrophages. The protein is CDC42 small effector protein 2 (CDC42SE2) of Homo sapiens (Human).